The following is a 296-amino-acid chain: Small ribosomal subunit biogenesis GTPase RsgA (296 aa).

Residues 65-223 enclose the CP-type G domain; the sequence is INRIGRPAVA…LADTPGFSSI (159 aa). GTP contacts are provided by residues 114–117 and 166–174; these read SKAD and GQSGAGKST. Residues Cys-247, Cys-252, His-254, and Cys-260 each coordinate Zn(2+).

The protein belongs to the TRAFAC class YlqF/YawG GTPase family. RsgA subfamily. In terms of assembly, monomer. Associates with 30S ribosomal subunit, binds 16S rRNA. It depends on Zn(2+) as a cofactor.

It localises to the cytoplasm. Functionally, one of several proteins that assist in the late maturation steps of the functional core of the 30S ribosomal subunit. Helps release RbfA from mature subunits. May play a role in the assembly of ribosomal proteins into the subunit. Circularly permuted GTPase that catalyzes slow GTP hydrolysis, GTPase activity is stimulated by the 30S ribosomal subunit. The protein is Small ribosomal subunit biogenesis GTPase RsgA of Lactobacillus acidophilus (strain ATCC 700396 / NCK56 / N2 / NCFM).